The chain runs to 947 residues: MTPLSSPLSQYWQTVVERLPEGFTETSLSAQAKSVLTFSDFALDSVIAHPEWLAELESASPQADEWRHYAGWLQEALAGVCDDASLMRELRFFRRRIMVRIAWAQTLSLVDDETILQQLSHLAETLIVGARDWLYAACCREWGTPCNPQGVPQPLLILGMGKLGGGELNFSSDIDLIFAWPEHGETRGGRRELDNAQFFTRLGQRLIKALDQPTMDGFVYRVDMRLRPFGDSGPLVLSFAALEDYYQEQGRDWERYAMVKARLMGDNDDAWSRELRAMLRPFVFRRYIDFSVIQSLRNMKGMIAREVRRRGLKDNIKLGAGGIREIEFIVQVFQLIRGGREPSLQSRSLLPTLDAIAALHLLPENDVAQLRVAYLFLRRLENLLQSINDEQTQTLPADDLNRARLAWGMKAENWPQLVGELTDHMANVRRVFNELIGDDEADTPQEEERSEPWREVWQDALQEDDSTPVLAHLADEDRRQVLTLIADFRKELDKRPIGPRGRQVLDQLMPHLLADVCSREDAVVTLSRITPLLAGIVTRTTYLELLSEFPGALKHLIMLCAASPMIASQLARYPLLLDELLDPGTLYQPTATDAYRDELRQYLLRVPEEDEEQQLEALRQFKQAQLLRIAAADIAGTLPVMKVSDHLTWLAEAMIDAVVQQAWTQMVARYGQPAHLDERQGRGFAVVGYGKLGGWELGYSSDLDLIFLHDCPMDVMTNGEREIDGRQFYLRLAQRIMHLFSTRTSSGILYEVDARLRPSGAAGMLVTSADAFADYQQHEAWTWEHQALVRARVVYGDPQLTSQFDAVRRTIMTTARDGKTLQTEVREMREKMRAHLGNKHRDRFDIKADEGGITDIEFIAQYLVLRYAHEKPKLTRWSDNVRILELLAQNGIMDDHEAQALTVAYTTLRDELHHLALQELPGHVAQTCFSKERALVQASWRKWLVAV.

Residues 1 to 440 are adenylyl removase; sequence MTPLSSPLSQ…VFNELIGDDE (440 aa). Residues 450–947 form an adenylyl transferase region; the sequence is SEPWREVWQD…ASWRKWLVAV (498 aa).

The protein belongs to the GlnE family. Mg(2+) is required as a cofactor.

The enzyme catalyses [glutamine synthetase]-O(4)-(5'-adenylyl)-L-tyrosine + phosphate = [glutamine synthetase]-L-tyrosine + ADP. It catalyses the reaction [glutamine synthetase]-L-tyrosine + ATP = [glutamine synthetase]-O(4)-(5'-adenylyl)-L-tyrosine + diphosphate. Its function is as follows. Involved in the regulation of glutamine synthetase GlnA, a key enzyme in the process to assimilate ammonia. When cellular nitrogen levels are high, the C-terminal adenylyl transferase (AT) inactivates GlnA by covalent transfer of an adenylyl group from ATP to specific tyrosine residue of GlnA, thus reducing its activity. Conversely, when nitrogen levels are low, the N-terminal adenylyl removase (AR) activates GlnA by removing the adenylyl group by phosphorolysis, increasing its activity. The regulatory region of GlnE binds the signal transduction protein PII (GlnB) which indicates the nitrogen status of the cell. The polypeptide is Bifunctional glutamine synthetase adenylyltransferase/adenylyl-removing enzyme (Salmonella heidelberg (strain SL476)).